Here is a 355-residue protein sequence, read N- to C-terminus: Na(+)/H(+) exchange regulatory cofactor NHE-RF1 (355 aa).

At Ser2 the chain carries N-acetylserine. A phosphoserine mark is found at Ser2 and Ser46. Residues 14-94 (LCCLEKGPNG…AVRLLVVDPE (81 aa)) form the PDZ 1 domain. 2 stretches are compositionally biased toward basic and acidic residues: residues 110–119 (LLRPQEKSEQ) and 127–146 (DTHE…RELR). A disordered region spans residues 110 to 146 (LLRPQEKSEQAEPPAAADTHEAGDQNEAEKSHLRELR). A PDZ 2 domain is found at 149-229 (LCTMKKGPNG…EAKLLVVDKE (81 aa)). A disordered region spans residues 244 to 355 (EHLDGPLPEP…SKKNELFSNL (112 aa)). The span at 259–268 (IQKESSREAL) shows a compositional bias: basic and acidic residues. Residues Ser264, Ser275, Ser285, and Ser286 each carry the phosphoserine modification. The span at 270–286 (EPASESPRPALARSASS) shows a compositional bias: low complexity. A Phosphothreonine modification is found at Thr288. Residues Ser289, Ser294, and Ser297 each carry the phosphoserine modification. A compositionally biased stretch (low complexity) spans 303-323 (STEPSSTSSSSSDPILDLNIS). The span at 345–355 (WSKKNELFSNL) shows a compositional bias: basic and acidic residues.

In terms of assembly, homodimer, and heterodimer with NHERF2. Binds the N-termini of EZR, RDX and MSN. Binds the C-termini of PDGFRA, PDGFRB, ADRB2 and NOS2. Binds ARHGAP17, EPI64, RACK1, OPRK1, GNAQ, CTNNB1, PLCB3 and CLCN3. Forms a complex with CFTR and SLC4A7. Forms a complex with SLC4A7 and ATP6V1B1. Binds PDZK1. Binds the C-terminus of PAG1. In resting T-cells, part of a PAG1-NHERF1-MSN complex which is disrupted upon TCR activation. Directly interacts with HTR4. Interacts with MCC. Interacts with TRPC4 (via the PDZ-binding domain). Interacts (via the PDZ 1 domain) with PODXL (via the C-terminal PDZ-binding motif DTHL); interaction is not detected in glomerular epithelium cells. Interacts (via the PDZ 1 domain) with PODXL (via the C-terminal PDZ-binding motif DTHL); the interaction take place early in the secretory pathway and is necessary for its apical membrane sorting. Interacts with SLC34A1. Interacts with CFTR, SLC26A3 and SLC26A6. Interacts (via PDZ domains) with ACE2 (via PDZ-binding motif); the interaction may enhance ACE2 membrane residence. As to expression, expressed in spermatogenic cells.

The protein localises to the cytoplasm. Its subcellular location is the apical cell membrane. It localises to the cell projection. It is found in the filopodium. The protein resides in the ruffle. The protein localises to the microvillus. Its subcellular location is the endomembrane system. In terms of biological role, scaffold protein that connects plasma membrane proteins with members of the ezrin/moesin/radixin family and thereby helps to link them to the actin cytoskeleton and to regulate their surface expression. Necessary for recycling of internalized ADRB2. Was first known to play a role in the regulation of the activity and subcellular location of SLC9A3. Necessary for cAMP-mediated phosphorylation and inhibition of SLC9A3. May enhance Wnt signaling. May participate in HTR4 targeting to microvilli. Involved in the regulation of phosphate reabsorption in the renal proximal tubules. Involved in sperm capacitation. May participate in the regulation of the chloride and bicarbonate homeostasis in spermatozoa. The sequence is that of Na(+)/H(+) exchange regulatory cofactor NHE-RF1 (Nherf1) from Mus musculus (Mouse).